We begin with the raw amino-acid sequence, 286 residues long: Beta-lactamase SHV-1 (286 aa).

Positions 1–21 (MRYIRLCIISLLATLPLAVHA) are cleaved as a signal peptide. Serine 66 functions as the Acyl-ester intermediate in the catalytic mechanism. Cysteine 73 and cysteine 119 are oxidised to a cystine. Glutamate 164 serves as the catalytic Proton acceptor. 230–232 (KTG) contributes to the substrate binding site.

The protein belongs to the class-A beta-lactamase family.

It catalyses the reaction a beta-lactam + H2O = a substituted beta-amino acid. This chain is Beta-lactamase SHV-1 (bla), found in Escherichia coli.